Here is a 438-residue protein sequence, read N- to C-terminus: Serine carboxypeptidase-like 5 (438 aa).

An N-terminal signal peptide occupies residues 1 to 28; the sequence is MANYISSVLKSLLLLLHLVFLIQQHVDS. 3 cysteine pairs are disulfide-bonded: C87-C328, C251-C263, and C287-C294. N-linked (GlcNAc...) asparagine glycosylation is present at N108. The active site involves S183. A glycan (N-linked (GlcNAc...) asparagine) is linked at N347. The active site involves D363. Residue N379 is glycosylated (N-linked (GlcNAc...) asparagine). The active site involves H416.

This sequence belongs to the peptidase S10 family. Expressed in seedlings, roots, and siliques.

The protein localises to the secreted. Probable carboxypeptidase. The chain is Serine carboxypeptidase-like 5 (SCPL5) from Arabidopsis thaliana (Mouse-ear cress).